Consider the following 193-residue polypeptide: Adenylate kinase (193 aa).

Gly-11–Thr-16 is an ATP binding site. The interval Ser-31–Val-60 is NMP. AMP is bound by residues Thr-32, Arg-37, Asp-58–Val-60, Gly-86–Arg-89, and Gln-93. Residues Gly-127 to Asp-137 form an LID region. Arg-128 is a binding site for ATP. Residues Arg-134 and Arg-145 each contribute to the AMP site. An ATP-binding site is contributed by Gly-173.

This sequence belongs to the adenylate kinase family. In terms of assembly, monomer.

The protein localises to the cytoplasm. The catalysed reaction is AMP + ATP = 2 ADP. The protein operates within purine metabolism; AMP biosynthesis via salvage pathway; AMP from ADP: step 1/1. Catalyzes the reversible transfer of the terminal phosphate group between ATP and AMP. Plays an important role in cellular energy homeostasis and in adenine nucleotide metabolism. This chain is Adenylate kinase, found in Renibacterium salmoninarum (strain ATCC 33209 / DSM 20767 / JCM 11484 / NBRC 15589 / NCIMB 2235).